The sequence spans 342 residues: Trans-3-hydroxy-L-proline dehydratase (342 aa).

Ser90 acts as the Proton acceptor in catalysis. Substrate-binding positions include 91 to 92 (GS), Asp252, and 257 to 258 (GT).

It belongs to the proline racemase family.

The enzyme catalyses trans-3-hydroxy-L-proline = 1-pyrroline-2-carboxylate + H2O. Functionally, catalyzes the dehydration of trans-3-hydroxy-L-proline (t3LHyp) to Delta(1)-pyrroline-2-carboxylate (Pyr2C). Can also catalyze the epimerization of trans-4-hydroxy-L-proline (t4LHyp) to cis-4-hydroxy-D-proline (c4DHyp), albeit with 150-fold lower efficiency. May be involved in the degradation pathway that converts t3LHyp to L-proline, which would allow R.meliloti to grow on t3LHyp as a sole carbon source. Displays no proline racemase activity. This is Trans-3-hydroxy-L-proline dehydratase from Rhizobium meliloti (strain 1021) (Ensifer meliloti).